The sequence spans 452 residues: MEFQAVVMAVGGGSRMTDLTSSIPKPLLPAGNKPLIWYPLNLLERVGFEEVIVVTTRDVQKALCAEFKMKMKPDIVCIPDDADMGTADSLRYMYPKLKTDVLVLSCDLITDVALHEVVDLFRAYDASLAMLMRKGQDSLEPVPGQKGKKKAVEQRDFIGVDSTGKRLLFMANEADLDEELVIKGSILQKYPRIRFHTDLVDAHLYCLKKYVVDFLMENGSITSIRSELIPYLVRKQFSSASSQQGQEEKEEDLKKKELKSLDIYSFLKEANTLNLAPYDACWNACRGDRWEDLPRSQVRCYVHIMKEGLCSRVSTLGLYMEANRQVPKLLSALCPEEPLVHSSAQIVSKHLVGVDSLIGPETQIGEKSSIKRSVIGSSCLIKDRVTITNCLLMNSVTVEEGSNIQGSVICNNAVIEKGADIKDCLIGSGQRIEAKAKRVNEVIVGSDQLMEI.

N-acetylmethionine is present on M1. S260 carries the post-translational modification Phosphoserine.

It belongs to the eIF-2B gamma/epsilon subunits family. As to quaternary structure, component of the translation initiation factor 2B (eIF2B) complex which is a heterodecamer of two sets of five different subunits: alpha, beta, gamma, delta and epsilon. Subunits alpha, beta and delta comprise a regulatory subcomplex and subunits epsilon and gamma comprise a catalytic subcomplex. Within the complex, the hexameric regulatory complex resides at the center, with the two heterodimeric catalytic subcomplexes bound on opposite sides.

The protein localises to the cytoplasm. Its subcellular location is the cytosol. Its activity is regulated as follows. Activated by the chemical integrated stress response (ISR) inhibitor ISRIB which stimulates guanine nucleotide exchange factor activity for both phosphorylated and unphosphorylated eIF2. In terms of biological role, acts as a component of the translation initiation factor 2B (eIF2B) complex, which catalyzes the exchange of GDP for GTP on the eukaryotic initiation factor 2 (eIF2) complex gamma subunit. Its guanine nucleotide exchange factor activity is repressed when bound to eIF2 complex phosphorylated on the alpha subunit, thereby limiting the amount of methionyl-initiator methionine tRNA available to the ribosome and consequently global translation is repressed. The polypeptide is Translation initiation factor eIF2B subunit gamma (EIF2B3) (Macaca fascicularis (Crab-eating macaque)).